We begin with the raw amino-acid sequence, 276 residues long: N-acetylmuramoyl-L-alanine amidase AmiD (276 aa).

The N-terminal stretch at 1–16 (MRRFFWLVAAALLLAG) is a signal peptide. Cysteine 17 carries N-palmitoyl cysteine lipidation. The S-diacylglycerol cysteine moiety is linked to residue cysteine 17. In terms of domain architecture, N-acetylmuramoyl-L-alanine amidase spans 42-179 (PRIKVLVIHY…APQRKDDPGP (138 aa)). Residue histidine 50 participates in Zn(2+) binding. A substrate-binding site is contributed by 51–52 (YT). Glutamate 119 acts as the Proton acceptor in catalysis. Zn(2+)-binding residues include histidine 166 and aspartate 176.

The protein belongs to the N-acetylmuramoyl-L-alanine amidase 2 family. Zn(2+) is required as a cofactor.

Its subcellular location is the cell outer membrane. It catalyses the reaction Hydrolyzes the link between N-acetylmuramoyl residues and L-amino acid residues in certain cell-wall glycopeptides.. The protein is N-acetylmuramoyl-L-alanine amidase AmiD (amiD) of Escherichia coli (strain K12).